The primary structure comprises 345 residues: MVGKGLPVLKNALKQLEGLSKAASVGTAEVIQKAYHQLTKLQAARLVFAYVTLVLLYVIMMLILTSSVIDLVGFSTPHRLPPFVDQAQLKHFNTAQDTLMIVFVALGVNFLLVILVFLIYLLIKLKHIEAPLSGSMSYFAHPVLKYIFGIMSFIFVFIITVFSILRITCADANTLVQDLELLSNTSFADTNFTNAAHAAVSGLLTNCTAPHTDIAKCGYSGVHLLMSLESRTRRLWTGSTSGGLTEAGIPRMLTAVGSCWMTKEVVPVILLVMFILYMFLHLWMVIRALRRRRLGTIIEDEHLPLTSYEDGELDEEGGADNLLYAIPPGSTIPGMRKWNYTPARA.

A run of 4 helical transmembrane segments spans residues 46 to 63, 101 to 118, 147 to 165, and 265 to 286; these read LVFAYVTLVLLYVIMMLI, IVFVALGVNFLLVILVFL, IFGIMSFIFVFIITVFSIL, and VVPVILLVMFILYMFLHLWMVI.

The protein resides in the membrane. The protein is Putative membrane protein ORF59 (ORF59) of Ictalurid herpesvirus 1 (strain Auburn) (IcHV-1).